The sequence spans 235 residues: NADH-quinone oxidoreductase subunit C (235 aa).

It belongs to the complex I 30 kDa subunit family. In terms of assembly, NDH-1 is composed of 14 different subunits. Subunits NuoB, C, D, E, F, and G constitute the peripheral sector of the complex.

It is found in the cell membrane. The enzyme catalyses a quinone + NADH + 5 H(+)(in) = a quinol + NAD(+) + 4 H(+)(out). Its function is as follows. NDH-1 shuttles electrons from NADH, via FMN and iron-sulfur (Fe-S) centers, to quinones in the respiratory chain. The immediate electron acceptor for the enzyme in this species is believed to be a menaquinone. Couples the redox reaction to proton translocation (for every two electrons transferred, four hydrogen ions are translocated across the cytoplasmic membrane), and thus conserves the redox energy in a proton gradient. The sequence is that of NADH-quinone oxidoreductase subunit C from Mycobacterium avium (strain 104).